Here is a 177-residue protein sequence, read N- to C-terminus: Interleukin-10 (177 aa).

The first 19 residues, 1–19 (MPSSSAVLCCLVFLAGVAA), serve as a signal peptide directing secretion. Disulfide bonds link cysteine 31-cysteine 127 and cysteine 81-cysteine 133. N-linked (GlcNAc...) asparagine glycosylation is present at asparagine 135.

This sequence belongs to the IL-10 family. As to quaternary structure, homodimer. Interacts with IL10RA and IL10RB.

It is found in the secreted. Major immune regulatory cytokine that acts on many cells of the immune system where it has profound anti-inflammatory functions, limiting excessive tissue disruption caused by inflammation. Mechanistically, IL10 binds to its heterotetrameric receptor comprising IL10RA and IL10RB leading to JAK1 and STAT2-mediated phosphorylation of STAT3. In turn, STAT3 translocates to the nucleus where it drives expression of anti-inflammatory mediators. Targets antigen-presenting cells (APCs) such as macrophages and monocytes and inhibits their release of pro-inflammatory cytokines including granulocyte-macrophage colony-stimulating factor /GM-CSF, granulocyte colony-stimulating factor/G-CSF, IL-1 alpha, IL-1 beta, IL-6, IL-8 and TNF-alpha. Also interferes with antigen presentation by reducing the expression of MHC-class II and co-stimulatory molecules, thereby inhibiting their ability to induce T cell activation. In addition, controls the inflammatory response of macrophages by reprogramming essential metabolic pathways including mTOR signaling. The polypeptide is Interleukin-10 (IL10) (Ovis aries (Sheep)).